Consider the following 295-residue polypeptide: Large ribosomal subunit protein uL29m (295 aa).

Belongs to the universal ribosomal protein uL29 family. Component of the mitochondrial large ribosomal subunit. Mature mitochondrial ribosomes consist of a small (37S) and a large (54S) subunit. The 37S subunit contains at least 33 different proteins and 1 molecule of RNA (15S). The 54S subunit contains at least 45 different proteins and 1 molecule of RNA (21S).

Its subcellular location is the mitochondrion. The sequence is that of Large ribosomal subunit protein uL29m (MRPL4) from Meyerozyma guilliermondii (strain ATCC 6260 / CBS 566 / DSM 6381 / JCM 1539 / NBRC 10279 / NRRL Y-324) (Yeast).